The following is a 224-amino-acid chain: Fibronectin type III domain-containing protein 9 (224 aa).

Positions 1-101 constitute a Fibronectin type-III domain; sequence MNIEVGNISY…FHTLDKSPLA (101 aa). Residues 113 to 133 form a helical membrane-spanning segment; it reads LWVLMAILLACFTAVLAFICL. A disordered region spans residues 175–224; that stretch reads LQGLPLVEMPRKNSRDGAELDPEANQDAPDAGALQRGGGDPPAILPHCGE. The span at 183 to 192 shows a compositional bias: basic and acidic residues; the sequence is MPRKNSRDGA.

The protein resides in the membrane. The protein is Fibronectin type III domain-containing protein 9 (FNDC9) of Homo sapiens (Human).